The sequence spans 501 residues: ATP synthase subunit alpha (501 aa).

ATP is bound at residue 169–176; that stretch reads GDRQTGKT.

Belongs to the ATPase alpha/beta chains family. As to quaternary structure, F-type ATPases have 2 components, CF(1) - the catalytic core - and CF(0) - the membrane proton channel. CF(1) has five subunits: alpha(3), beta(3), gamma(1), delta(1), epsilon(1). CF(0) has three main subunits: a(1), b(2) and c(9-12). The alpha and beta chains form an alternating ring which encloses part of the gamma chain. CF(1) is attached to CF(0) by a central stalk formed by the gamma and epsilon chains, while a peripheral stalk is formed by the delta and b chains.

The protein localises to the cell membrane. The catalysed reaction is ATP + H2O + 4 H(+)(in) = ADP + phosphate + 5 H(+)(out). Its function is as follows. Produces ATP from ADP in the presence of a proton gradient across the membrane. The alpha chain is a regulatory subunit. In Desulforamulus reducens (strain ATCC BAA-1160 / DSM 100696 / MI-1) (Desulfotomaculum reducens), this protein is ATP synthase subunit alpha.